Consider the following 334-residue polypeptide: HTH-type transcriptional repressor PurR (334 aa).

An HTH lacI-type domain is found at 2-56 (ATIKDVARMAGVSTTTVSHVINKTRFVAEATQKKVLAAVDDLNYAPSAVARSLKC). Positions 4–23 (IKDVARMAGVSTTTVSHVIN) form a DNA-binding region, H-T-H motif. A DNA-binding region spans residues 48 to 56 (SAVARSLKC). The hypoxanthine site is built by F73, K189, T191, F220, and D274.

As to quaternary structure, homodimer.

It participates in purine metabolism; purine nucleotide biosynthesis [regulation]. In terms of biological role, is the main repressor of the genes involved in the de novo synthesis of purine nucleotides, regulating purB, purC, purEK, purF, purHD, purL, purMN and guaBA expression. PurR is allosterically activated to bind its cognate DNA by binding the purine corepressors, hypoxanthine or guanine, thereby effecting transcription repression. This Photobacterium profundum (strain SS9) protein is HTH-type transcriptional repressor PurR.